A 375-amino-acid chain; its full sequence is DNA replication and repair protein RecF (375 aa).

An ATP-binding site is contributed by 30 to 37; the sequence is GNNGSGKS.

It belongs to the RecF family.

The protein localises to the cytoplasm. Functionally, the RecF protein is involved in DNA metabolism; it is required for DNA replication and normal SOS inducibility. RecF binds preferentially to single-stranded, linear DNA. It also seems to bind ATP. This chain is DNA replication and repair protein RecF, found in Hahella chejuensis (strain KCTC 2396).